An 82-amino-acid polypeptide reads, in one-letter code: Small ribosomal subunit protein bS16 (82 aa).

The protein belongs to the bacterial ribosomal protein bS16 family.

This chain is Small ribosomal subunit protein bS16, found in Salmonella agona (strain SL483).